The sequence spans 507 residues: Histidine ammonia-lyase (507 aa).

Residues 141–143 (ASG) constitute a cross-link (5-imidazolinone (Ala-Gly)). S142 bears the 2,3-didehydroalanine (Ser) mark.

It belongs to the PAL/histidase family. In terms of processing, contains an active site 4-methylidene-imidazol-5-one (MIO), which is formed autocatalytically by cyclization and dehydration of residues Ala-Ser-Gly.

Its subcellular location is the cytoplasm. The catalysed reaction is L-histidine = trans-urocanate + NH4(+). It functions in the pathway amino-acid degradation; L-histidine degradation into L-glutamate; N-formimidoyl-L-glutamate from L-histidine: step 1/3. The polypeptide is Histidine ammonia-lyase (Cereibacter sphaeroides (strain KD131 / KCTC 12085) (Rhodobacter sphaeroides)).